Here is a 544-residue protein sequence, read N- to C-terminus: Chaperonin GroEL 1 (544 aa).

ATP is bound by residues 30-33 (TLGP), Lys51, 87-91 (DGTTT), Gly415, 481-483 (DAL), and Asp497.

It belongs to the chaperonin (HSP60) family. In terms of assembly, forms a cylinder of 14 subunits composed of two heptameric rings stacked back-to-back. Interacts with the co-chaperonin GroES.

The protein localises to the cytoplasm. It carries out the reaction ATP + H2O + a folded polypeptide = ADP + phosphate + an unfolded polypeptide.. Its function is as follows. Together with its co-chaperonin GroES, plays an essential role in assisting protein folding. The GroEL-GroES system forms a nano-cage that allows encapsulation of the non-native substrate proteins and provides a physical environment optimized to promote and accelerate protein folding. The chain is Chaperonin GroEL 1 from Chlamydia caviae (strain ATCC VR-813 / DSM 19441 / 03DC25 / GPIC) (Chlamydophila caviae).